Consider the following 251-residue polypeptide: Hydroxyacylglutathione hydrolase (251 aa).

Positions 53, 55, 57, 58, 110, 127, and 165 each coordinate Zn(2+).

It belongs to the metallo-beta-lactamase superfamily. Glyoxalase II family. As to quaternary structure, monomer. Requires Zn(2+) as cofactor.

It carries out the reaction an S-(2-hydroxyacyl)glutathione + H2O = a 2-hydroxy carboxylate + glutathione + H(+). It functions in the pathway secondary metabolite metabolism; methylglyoxal degradation; (R)-lactate from methylglyoxal: step 2/2. Thiolesterase that catalyzes the hydrolysis of S-D-lactoyl-glutathione to form glutathione and D-lactic acid. The chain is Hydroxyacylglutathione hydrolase from Yersinia pseudotuberculosis serotype IB (strain PB1/+).